The chain runs to 153 residues: 1,4-dihydroxy-2-naphthoyl-CoA hydrolase (153 aa).

D21 is a catalytic residue.

This sequence belongs to the 4-hydroxybenzoyl-CoA thioesterase family. DHNA-CoA hydrolase subfamily.

The catalysed reaction is 1,4-dihydroxy-2-naphthoyl-CoA + H2O = 1,4-dihydroxy-2-naphthoate + CoA + H(+). The protein operates within cofactor biosynthesis; phylloquinone biosynthesis. It participates in quinol/quinone metabolism; 1,4-dihydroxy-2-naphthoate biosynthesis; 1,4-dihydroxy-2-naphthoate from chorismate: step 7/7. Functionally, catalyzes the hydrolysis of 1,4-dihydroxy-2-naphthoyl-CoA (DHNA-CoA) to 1,4-dihydroxy-2-naphthoate (DHNA), a reaction involved in phylloquinone (vitamin K1) biosynthesis. The chain is 1,4-dihydroxy-2-naphthoyl-CoA hydrolase from Synechococcus sp. (strain WH7803).